Here is a 291-residue protein sequence, read N- to C-terminus: Small ribosomal subunit biogenesis GTPase RsgA 2 (291 aa).

The region spanning 63–221 (ENALVRPPVA…VADTPGFSSI (159 aa)) is the CP-type G domain. GTP contacts are provided by residues 112 to 115 (SKMD) and 164 to 172 (GQSGVGKST). 4 residues coordinate Zn(2+): cysteine 245, cysteine 250, histidine 252, and cysteine 258.

The protein belongs to the TRAFAC class YlqF/YawG GTPase family. RsgA subfamily. In terms of assembly, monomer. Associates with 30S ribosomal subunit, binds 16S rRNA. Requires Zn(2+) as cofactor.

The protein localises to the cytoplasm. One of several proteins that assist in the late maturation steps of the functional core of the 30S ribosomal subunit. Helps release RbfA from mature subunits. May play a role in the assembly of ribosomal proteins into the subunit. Circularly permuted GTPase that catalyzes slow GTP hydrolysis, GTPase activity is stimulated by the 30S ribosomal subunit. This is Small ribosomal subunit biogenesis GTPase RsgA 2 from Listeria innocua serovar 6a (strain ATCC BAA-680 / CLIP 11262).